The sequence spans 247 residues: Carboxy-S-adenosyl-L-methionine synthase (247 aa).

S-adenosyl-L-methionine contacts are provided by residues tyrosine 39, 64 to 66 (GCS), 89 to 90 (DN), 117 to 118 (DI), asparagine 132, and arginine 199.

It belongs to the class I-like SAM-binding methyltransferase superfamily. Cx-SAM synthase family. Homodimer.

It catalyses the reaction prephenate + S-adenosyl-L-methionine = carboxy-S-adenosyl-L-methionine + 3-phenylpyruvate + H2O. Its function is as follows. Catalyzes the conversion of S-adenosyl-L-methionine (SAM) to carboxy-S-adenosyl-L-methionine (Cx-SAM). This chain is Carboxy-S-adenosyl-L-methionine synthase, found in Escherichia fergusonii (strain ATCC 35469 / DSM 13698 / CCUG 18766 / IAM 14443 / JCM 21226 / LMG 7866 / NBRC 102419 / NCTC 12128 / CDC 0568-73).